Reading from the N-terminus, the 399-residue chain is Succinate--CoA ligase [ADP-forming] subunit beta (399 aa).

One can recognise an ATP-grasp domain in the interval Lys9 to Glu254. Residues Lys46, Gly53–Gly55, Val112, and Glu117 contribute to the ATP site. Asn209 and Asp223 together coordinate Mg(2+). Substrate is bound by residues Asn274 and Gly331–Met333.

This sequence belongs to the succinate/malate CoA ligase beta subunit family. In terms of assembly, heterotetramer of two alpha and two beta subunits. It depends on Mg(2+) as a cofactor.

It carries out the reaction succinate + ATP + CoA = succinyl-CoA + ADP + phosphate. The enzyme catalyses GTP + succinate + CoA = succinyl-CoA + GDP + phosphate. The protein operates within carbohydrate metabolism; tricarboxylic acid cycle; succinate from succinyl-CoA (ligase route): step 1/1. Functionally, succinyl-CoA synthetase functions in the citric acid cycle (TCA), coupling the hydrolysis of succinyl-CoA to the synthesis of either ATP or GTP and thus represents the only step of substrate-level phosphorylation in the TCA. The beta subunit provides nucleotide specificity of the enzyme and binds the substrate succinate, while the binding sites for coenzyme A and phosphate are found in the alpha subunit. This is Succinate--CoA ligase [ADP-forming] subunit beta from Erythrobacter litoralis (strain HTCC2594).